Here is a 1406-residue protein sequence, read N- to C-terminus: Inactive tyrosine-protein kinase PRAG1 (1406 aa).

Ser148 carries the post-translational modification Phosphoserine. A compositionally biased stretch (basic and acidic residues) spans 184 to 193 (EEKAVHKEKP). Disordered stretches follow at residues 184-205 (EEKA…STQE) and 217-248 (TTSG…SGDS). Residues Tyr253, Tyr365, and Tyr413 each carry the phosphotyrosine modification. 2 disordered regions span residues 372-470 (PAPE…TPQV) and 484-854 (DHRT…HSET). Positions 526–542 (RESHAHSASESKPKERP) are enriched in basic and acidic residues. Positions 546 to 576 (PKLSKSSPVGSPVSPSAGGPPVSPLADLSDG) are enriched in low complexity. 2 stretches are compositionally biased toward polar residues: residues 660 to 671 (NGPTDHSNSTTW) and 678 to 695 (DGSS…SKSA). Residues Ser696 and Ser745 each carry the phosphoserine modification. Composition is skewed to polar residues over residues 737 to 746 (SQGSAESLSP) and 754 to 770 (SFTT…SRTC). The residue at position 782 (Ser782) is a Phosphoserine. Residues 798–808 (SGSTEDVSPSG) are compositionally biased toward polar residues. The residue at position 826 (Ser826) is a Phosphoserine. The interval 933–976 (STQLQLHGLLSNISSKEGTYAKLGGLYTQSLARLVAKCEDLFMG) is required for homodimerization. The region spanning 978–1329 (QKKELHFNEN…EAKRVLQCLL (352 aa)) is the Protein kinase domain. Positions 1163–1173 (GPAPAPAPAPA) are enriched in pro residues. Positions 1163–1206 (GPAPAPAPAPAPAAAAPPCSSAAPPAGGTLSPAAGPASPEGPRE) are disordered. Residues 1174–1202 (PAAAAPPCSSAAPPAGGTLSPAAGPASPE) are compositionally biased toward low complexity. Residues 1331-1406 (GPRRELVQQP…LQSLKLLQLL (76 aa)) are required for homodimerization.

Belongs to the protein kinase superfamily. In terms of assembly, homodimer. Dimerization leads to the catalytic activation of CSK. Interacts (via C-terminus) with RND2. Interacts with CSK (via SH2 domain) in a Tyr-413 phosphorylation-dependent manner; this interaction potentiates kinase activity of CSK. Interacts with PEAK1. Interacts with NOTCH1 intracellular domain (N1ICD). Forms a complex with N1ICD and MAML1, in a MAML1-dependent manner. In terms of processing, phosphorylated by CSK on Tyr-253, Tyr-365, and Tyr-413; Tyr-413 is a primary site of phosphorylation.

Its subcellular location is the cytoplasm. The protein resides in the cell junction. It localises to the focal adhesion. The protein localises to the nucleus. Functionally, catalytically inactive protein kinase that acts as a scaffold protein. Functions as an effector of the small GTPase RND2, which stimulates RhoA activity and inhibits NGF-induced neurite outgrowth. Promotes Src family kinase (SFK) signaling by regulating the subcellular localization of CSK, a negative regulator of these kinases, leading to the regulation of cell morphology and motility by a CSK-dependent mechanism. Acts as a critical coactivator of Notch signaling. The protein is Inactive tyrosine-protein kinase PRAG1 of Homo sapiens (Human).